A 341-amino-acid polypeptide reads, in one-letter code: MLVKEYSFTLPDELIARYPANQRDGSRLMVLDRQTAARSEIAFSQIVEWLRPDDLLVLNDTKVIPARLFGQKETGGRIELFLVEPVGDACWRCLLRSSKRCRTGQSIRLAEGVTAEVVEQLGEQDWLIRFHGSDDFESWLQRVGQMPIPPYLNRESEELDRVRYQTVYASESGAVAAPTAGLHFTQELLERIQEKGIRLARVTLHVGLGTFQPVRVERVQDHVIHRERYRLPSETAAAVTETRARGGRVIAVGTTACRTLEYAADNAGHLQAGQGEADIFIYPGYRFKVVDALLTNFHLPESTLLMLVSAFGGKEFILSAYEAAVNRQFRFYSYGDAMLIV.

This sequence belongs to the QueA family. Monomer.

The protein resides in the cytoplasm. It catalyses the reaction 7-aminomethyl-7-carbaguanosine(34) in tRNA + S-adenosyl-L-methionine = epoxyqueuosine(34) in tRNA + adenine + L-methionine + 2 H(+). It functions in the pathway tRNA modification; tRNA-queuosine biosynthesis. Its function is as follows. Transfers and isomerizes the ribose moiety from AdoMet to the 7-aminomethyl group of 7-deazaguanine (preQ1-tRNA) to give epoxyqueuosine (oQ-tRNA). This Trichlorobacter lovleyi (strain ATCC BAA-1151 / DSM 17278 / SZ) (Geobacter lovleyi) protein is S-adenosylmethionine:tRNA ribosyltransferase-isomerase.